The sequence spans 366 residues: RISC-loading complex subunit TARBP2 (366 aa).

Sufficient for interaction with PRKRA stretches follow at residues 22–105 (MLAA…EPAL), 152–234 (SPQQ…DARD), and 287–366 (LGAL…AGSK). One can recognise a DRBM 1 domain in the interval 30 to 97 (TPISLLQEYG…AEVALKHLKG (68 aa)). Position 152 is a phosphoserine (serine 152). 2 DRBM domains span residues 159–227 (NPVG…RVHT) and 293–361 (ACCR…YLKI). The tract at residues 228 to 366 (VPLDARDGNE…QYLKIMAGSK (139 aa)) is sufficient for interaction with DICER1.

It belongs to the TARBP2 family. Self-associates. Component of the RISC loading complex (RLC), or micro-RNA (miRNA) loading complex (miRLC), which is composed of DICER1, AGO2 and TARBP2. Note that the trimeric RLC/miRLC is also referred to as RISC. Interacts with EIF2AK2/PKR and inhibits its protein kinase activity. Interacts with DHX9 and PRKRA. Interacts with DICER1, AGO2, MOV10, EIF6 and RPL7A (60S ribosome subunit); they form a large RNA-induced silencing complex (RISC). Interacts with IRF7; this interaction prevents IRF7 phosphorylation and activation. In terms of assembly, (Microbial infection) Interacts with FTSJ3; forms a complex with FTSJ3 and HIV-1 TAR RNA. As to quaternary structure, (Microbial infection) Interacts with ebolavirus VP30; this interaction, which occurs only in the presence of siRNA, prevents TARBP2 binding to DICER1 and thus allows the virus to counteract host RNA silencing. (Microbial infection) Interacts with ebolavirus VP35; this interaction prevents TARBP2 binding to DICER1 and thus allows the virus to counteract host RNA silencing.

Its subcellular location is the cytoplasm. The protein localises to the perinuclear region. It is found in the nucleus. In terms of biological role, required for formation of the RNA induced silencing complex (RISC). Component of the RISC loading complex (RLC), also known as the micro-RNA (miRNA) loading complex (miRLC), which is composed of DICER1, AGO2 and TARBP2. Within the RLC/miRLC, DICER1 and TARBP2 are required to process precursor miRNAs (pre-miRNAs) to mature miRNAs and then load them onto AGO2. AGO2 bound to the mature miRNA constitutes the minimal RISC and may subsequently dissociate from DICER1 and TARBP2. May also play a role in the production of short interfering RNAs (siRNAs) from double-stranded RNA (dsRNA) by DICER1. Binds in vitro to the PRM1 3'-UTR. Seems to act as a repressor of translation. For some pre-miRNA substrates, may also alter the choice of cleavage site by DICER1. Negatively regulates IRF7-mediated IFN-beta signaling triggered by viral infection by inhibiting the phosphorylation of IRF7 and promoting its 'Lys'-48-linked ubiquitination and degradation. Its function is as follows. (Microbial infection) Binds to the HIV-1 TAR RNA which is located in the long terminal repeat (LTR) of HIV-1, and stimulates translation of TAR-containing RNAs. This is achieved in part at least by binding to and inhibiting EIF2AK2/PKR, thereby reducing phosphorylation and inhibition of EIF2S1/eIF-2-alpha. May also promote translation of TAR-containing RNAs independently of EIF2AK2/PKR. Mediates recruitment of FTSJ3 methyltransferase to HIV-1 RNA, leading to 2'-O-methylation of the viral genome, allowing HIV-1 to escape the innate immune system. The protein is RISC-loading complex subunit TARBP2 of Homo sapiens (Human).